A 536-amino-acid chain; its full sequence is Testis-specific protein 10-interacting protein (536 aa).

Disordered stretches follow at residues M1 to S94, S185 to G234, and M246 to P305. A compositionally biased stretch (low complexity) spans S48 to S64. The segment covering K71 to R83 has biased composition (basic residues). The stretch at Q375–A451 forms a coiled coil. Residues G491–D536 form a disordered region.

In Rattus norvegicus (Rat), this protein is Testis-specific protein 10-interacting protein (Tsga10ip).